The following is a 150-amino-acid chain: uncharacterized protein (150 aa).

Helical transmembrane passes span 32–52, 64–84, 94–114, and 123–143; these read ILYG…AVSL, FNWL…FISG, IGAL…YLGF, and LIFH…GVNM.

It is found in the cell membrane. This is an uncharacterized protein from Bacillus subtilis (strain 168).